A 398-amino-acid polypeptide reads, in one-letter code: Thyrotropin-releasing hormone receptor (398 aa).

Over 1–28 (MENETVSELNQTQLQPRAVVALEYQVVT) the chain is Extracellular. N-linked (GlcNAc...) asparagine glycans are attached at residues N3 and N10. Residues 29–51 (ILLVLIICGLGIVGNIMVVLVVM) form a helical membrane-spanning segment. At 52–61 (RTKHMRTPTN) the chain is on the cytoplasmic side. A helical membrane pass occupies residues 62–83 (CYLVSLAVADLMVLVAAGLPNI). The Extracellular segment spans residues 84 to 99 (TDSIYGSWVYGYVGCL). A disulfide bond links C98 and C179. Residues 100–121 (CITYLQYLGINASSCSITAFTI) traverse the membrane as a helical segment. The Cytoplasmic portion of the chain corresponds to 122–144 (ERYIAICHPIKAQFLCTFSRAKK). The helical transmembrane segment at 145–168 (IIIFVWAFTSLYCMLWFFLLDLNI) threads the bilayer. The Extracellular segment spans residues 169-193 (STYKDAIVISCGYKISRNYYSPIYL). Residues 194–215 (MDFGVFYVVPMILATVLYGFIA) traverse the membrane as a helical segment. At 216–266 (RILFLNPIPSDPKENSKTWKNDSTHQNTNLNVNTSNRCFNSTVSSRKQVTK) the chain is on the cytoplasmic side. A helical transmembrane segment spans residues 267–288 (MLAVVVILFALLWMPYRTLVVV). Over 289 to 296 (NSFLSSPF) the chain is Extracellular. Residues 297 to 319 (QENWFLLFCRICIYLNSAINPVI) form a helical membrane-spanning segment. Over 320–398 (YNLMSQKFRA…LASEVSFSQS (79 aa)) the chain is Cytoplasmic.

The protein belongs to the G-protein coupled receptor 1 family.

The protein localises to the cell membrane. Receptor for thyrotropin-releasing hormone (TRH). Upon ligand binding, this G-protein-coupled receptor triggers activation of the phosphatidylinositol (IP3)-calcium-protein kinase C (PKC) pathway. This is Thyrotropin-releasing hormone receptor (TRHR) from Homo sapiens (Human).